We begin with the raw amino-acid sequence, 316 residues long: 4-hydroxy-3-methylbut-2-enyl diphosphate reductase (316 aa).

C12 is a [4Fe-4S] cluster binding site. (2E)-4-hydroxy-3-methylbut-2-enyl diphosphate contacts are provided by H41 and H74. Dimethylallyl diphosphate is bound by residues H41 and H74. Residues H41 and H74 each coordinate isopentenyl diphosphate. Residue C96 coordinates [4Fe-4S] cluster. A (2E)-4-hydroxy-3-methylbut-2-enyl diphosphate-binding site is contributed by H124. Position 124 (H124) interacts with dimethylallyl diphosphate. An isopentenyl diphosphate-binding site is contributed by H124. E126 acts as the Proton donor in catalysis. Position 165 (T165) interacts with (2E)-4-hydroxy-3-methylbut-2-enyl diphosphate. C195 provides a ligand contact to [4Fe-4S] cluster. (2E)-4-hydroxy-3-methylbut-2-enyl diphosphate contacts are provided by S223, S224, N225, and S267. Dimethylallyl diphosphate contacts are provided by S223, S224, N225, and S267. Positions 223, 224, 225, and 267 each coordinate isopentenyl diphosphate.

Belongs to the IspH family. [4Fe-4S] cluster serves as cofactor.

It carries out the reaction isopentenyl diphosphate + 2 oxidized [2Fe-2S]-[ferredoxin] + H2O = (2E)-4-hydroxy-3-methylbut-2-enyl diphosphate + 2 reduced [2Fe-2S]-[ferredoxin] + 2 H(+). It catalyses the reaction dimethylallyl diphosphate + 2 oxidized [2Fe-2S]-[ferredoxin] + H2O = (2E)-4-hydroxy-3-methylbut-2-enyl diphosphate + 2 reduced [2Fe-2S]-[ferredoxin] + 2 H(+). It participates in isoprenoid biosynthesis; dimethylallyl diphosphate biosynthesis; dimethylallyl diphosphate from (2E)-4-hydroxy-3-methylbutenyl diphosphate: step 1/1. The protein operates within isoprenoid biosynthesis; isopentenyl diphosphate biosynthesis via DXP pathway; isopentenyl diphosphate from 1-deoxy-D-xylulose 5-phosphate: step 6/6. Its function is as follows. Catalyzes the conversion of 1-hydroxy-2-methyl-2-(E)-butenyl 4-diphosphate (HMBPP) into a mixture of isopentenyl diphosphate (IPP) and dimethylallyl diphosphate (DMAPP). Acts in the terminal step of the DOXP/MEP pathway for isoprenoid precursor biosynthesis. The sequence is that of 4-hydroxy-3-methylbut-2-enyl diphosphate reductase from Acidithiobacillus ferrooxidans (strain ATCC 53993 / BNL-5-31) (Leptospirillum ferrooxidans (ATCC 53993)).